Reading from the N-terminus, the 202-residue chain is Imidazoleglycerol-phosphate dehydratase (202 aa).

It belongs to the imidazoleglycerol-phosphate dehydratase family.

The protein resides in the cytoplasm. It carries out the reaction D-erythro-1-(imidazol-4-yl)glycerol 3-phosphate = 3-(imidazol-4-yl)-2-oxopropyl phosphate + H2O. The protein operates within amino-acid biosynthesis; L-histidine biosynthesis; L-histidine from 5-phospho-alpha-D-ribose 1-diphosphate: step 6/9. The chain is Imidazoleglycerol-phosphate dehydratase from Synechococcus sp. (strain CC9605).